The sequence spans 105 residues: Integration host factor subunit beta (105 aa).

It belongs to the bacterial histone-like protein family. Heterodimer of an alpha and a beta chain.

Functionally, this protein is one of the two subunits of integration host factor, a specific DNA-binding protein that functions in genetic recombination as well as in transcriptional and translational control. This is Integration host factor subunit beta from Bradyrhizobium sp. (strain ORS 278).